Here is an 835-residue protein sequence, read N- to C-terminus: Transcription intermediary factor 1-beta (835 aa).

Residues 1-19 (MAASAAAASAAAASAASGS) show a composition bias toward low complexity. Positions 1–49 (MAASAAAASAAAASAASGSPGPGEGSAGGEKRSTAPSAAASASASAAAS) are disordered. A2 carries the N-acetylalanine modification. Phosphoserine occurs at positions 19 and 26. A Glycyl lysine isopeptide (Lys-Gly) (interchain with G-Cter in SUMO2) cross-link involves residue K31. Over residues 35-49 (APSAAASASASAAAS) the composition is skewed to low complexity. The residue at position 50 (S50) is a Phosphoserine. An RING-type zinc finger spans residues 65 to 121 (CGVCRERLRPEREPRLLPCLHSACSACLGPAAPAAANSSGDGGAAGDGTVVDCPVCK). An RBCC domain region spans residues 65–376 (CGVCRERLRP…LIYFQLHRAL (312 aa)). Residue K127 forms a Glycyl lysine isopeptide (Lys-Gly) (interchain with G-Cter in SUMO2) linkage. S138 bears the Phosphoserine mark. The segment at 148–195 (DANQCCTSCEDNAPATSYCVECSEPLCETCVEAHQRVKYTKDHTVRST) adopts a B box-type 1; atypical zinc-finger fold. Zn(2+) is bound by residues C153, C156, C177, and H181. K199 is covalently cross-linked (Glycyl lysine isopeptide (Lys-Gly) (interchain with G-Cter in SUMO2)). The B box-type 2 zinc finger occupies 204–245 (ERTVYCNVHKHEPLVLFCESCDTLTCRDCQLNAHKDHQYQFL). Residues C209, H212, C232, and H237 each coordinate Zn(2+). The leucine zipper alpha helical coiled-coil region stretch occupies residues 246-376 (EDAVRNQRKL…LIYFQLHRAL (131 aa)). Positions 247-376 (DAVRNQRKLL…LIYFQLHRAL (130 aa)) are interaction with MAGEC2. Residues K254 and K261 each participate in a glycyl lysine isopeptide (Lys-Gly) (interchain with G-Cter in SUMO2) cross-link. K266 bears the N6-acetyllysine mark. Residue K272 forms a Glycyl lysine isopeptide (Lys-Gly) (interchain with G-Cter in SUMO2) linkage. Position 304 is an N6-acetyllysine; alternate (K304). A Glycyl lysine isopeptide (Lys-Gly) (interchain with G-Cter in SUMO2); alternate cross-link involves residue K304. A Glycyl lysine isopeptide (Lys-Gly) (interchain with G-Cter in SUMO2) cross-link involves residue K319. Residue K340 is modified to N6-acetyllysine. A Glycyl lysine isopeptide (Lys-Gly) (interchain with G-Cter in SUMO2) cross-link involves residue K366. The involved in binding PPP1CA stretch occupies residues 366-370 (KLIYF). An N6-acetyllysine; alternate modification is found at K377. A Glycyl lysine isopeptide (Lys-Gly) (interchain with G-Cter in SUMO2); alternate cross-link involves residue K377. K377 is covalently cross-linked (Glycyl lysine isopeptide (Lys-Gly) (interchain with G-Cter in SUMO1); alternate). K407 is covalently cross-linked (Glycyl lysine isopeptide (Lys-Gly) (interchain with G-Cter in SUMO2)). The disordered stretch occupies residues 411–480 (ERPGTNSTGP…SRSGEGEVSG (70 aa)). The residue at position 417 (S417) is a Phosphoserine. Residue K434 forms a Glycyl lysine isopeptide (Lys-Gly) (interchain with G-Cter in SUMO2) linkage. Positions 434 to 443 (KQGSGSSQPM) are enriched in polar residues. Residues S437, S439, and S453 each carry the phosphoserine modification. K469 participates in a covalent cross-link: Glycyl lysine isopeptide (Lys-Gly) (interchain with G-Cter in SUMO2); alternate. A Glycyl lysine isopeptide (Lys-Gly) (interchain with G-Cter in SUMO1); alternate cross-link involves residue K469. R470 is modified (citrulline). Position 471 is a phosphoserine (S471). A Citrulline modification is found at R472. Residues S473, S479, and S489 each carry the phosphoserine modification. The segment at 476–513 (GEVSGLMRKVPRVSLERLDLDLTADSQPPVFKVFPGST) is HP1 box. Positions 481–494 (LMRKVPRVSLERLD) match the PxVxL motif motif. T498 is subject to Phosphothreonine. S501 carries the post-translational modification Phosphoserine. Residue K507 forms a Glycyl lysine isopeptide (Lys-Gly) (interchain with G-Cter in SUMO2) linkage. Position 541 is a phosphothreonine (T541). A Glycyl lysine isopeptide (Lys-Gly) (interchain with G-Cter in SUMO2); alternate cross-link involves residue K554. Residue K554 forms a Glycyl lysine isopeptide (Lys-Gly) (interchain with G-Cter in SUMO); alternate linkage. K575 participates in a covalent cross-link: Glycyl lysine isopeptide (Lys-Gly) (interchain with G-Cter in SUMO2). A disordered region spans residues 584–618 (GPGAEGPRLASPSGSTSSGLEVVAPEGTSAPGGGP). Position 594 is a phosphoserine (S594). The segment at 625 to 672 (ATICRVCQKPGDLVMCNQCEFCFHLDCHLPALQDVPGEEWSCSLCHVL) adopts a PHD-type zinc-finger fold. Residue K676 forms a Glycyl lysine isopeptide (Lys-Gly) (interchain with G-Cter in SUMO) linkage. Phosphoserine is present on residues S683, S689, and S697. A Bromo domain is found at 695–799 (KLSPANQRKC…RFFETRMNEA (105 aa)). Residue K750 forms a Glycyl lysine isopeptide (Lys-Gly) (interchain with G-Cter in SUMO2); alternate linkage. A Glycyl lysine isopeptide (Lys-Gly) (interchain with G-Cter in SUMO1); alternate cross-link involves residue K750. K750 participates in a covalent cross-link: Glycyl lysine isopeptide (Lys-Gly) (interchain with G-Cter in SUMO); alternate. A Phosphoserine modification is found at S752. Phosphotyrosine is present on Y755. S757 carries the phosphoserine modification. K770, K774, and K779 each carry N6-acetyllysine; alternate. Residues K770, K774, and K779 each participate in a glycyl lysine isopeptide (Lys-Gly) (interchain with G-Cter in SUMO2); alternate cross-link. A Glycyl lysine isopeptide (Lys-Gly) (interchain with G-Cter in SUMO1); alternate cross-link involves residue K779. At S784 the chain carries Phosphoserine. K804 participates in a covalent cross-link: Glycyl lysine isopeptide (Lys-Gly) (interchain with G-Cter in SUMO2); alternate. Residue K804 forms a Glycyl lysine isopeptide (Lys-Gly) (interchain with G-Cter in SUMO); alternate linkage. Residues 815-835 (MSLPGAGLSSQELSGGPGDGP) form a disordered region. S824 bears the Phosphoserine; by ATM and ATR and dsDNA kinase mark.

The protein belongs to the TRIM/RBCC family. Interacts with SETX. Oligomer; the RBCC domain homotrimerizes and interacts with one molecule of KRAB to form the KRAB-KAP1 corepressor complex. Binding to a KRAB domain is an absolute requirement for silencing gene expression. Interacts with CEBPB and NR3C1. Interacts with a number of KRAB-ZFP proteins including ZNF10, ZFP53, ZFP68, ZNF382 and ZNF256. Interacts with NCOR1, NR3C1 and CHD3. Interacts with CEBPB (via the RING-type and PHD-type zinc fingers). Component of a ternary complex that includes TRIM28, a HP1 protein (CBX1, CBX3 OR CBX5), a KRAB domain-containing protein, and DNA. Interacts with CBX5 (via the PxVxL motif); the interaction occurs in interphase nuclei and competes for binding POGZ. Interacts with POGZ; the interaction competes for interaction with CBX5. Interacts with SETDB1; the interaction is enhanced by KAP1 sumoylation, stimulates SETDB1 histone methyltransferase activity and gene silencing. Interacts (via the PHD-type zinc finger) with UBE2I; the interaction is required for sumoylation and repressor activity. Component of the TRIM28/KAP1-ERBB4-MDM2 complex involved in connecting growth factor and DNA damage responses. Interacts directly with ERBB4; the interaction represses ERBB4-mediated transcription activity. Interacts with MDM2; the interaction contributes to p53/TP53 inactivation. Component of the TRIM28/KAP1-MDM2-p53/TP53; involved in regulating p53/TP53 stabilization and activity. Interacts (via the leucine zipper alpha helical coiled-coil) with E2F1 (central region); the interaction inhibits E2F1 acetylation and transcriptional activity. Interacts with PPP1CA; the interaction dephosphorylates TRIM28 at Ser-824 and forms a complex at the p21 promoter site. Interacts with PPP1CB; the interaction is weak but is increased on dephosphorylation at Ser-824. Interacts with FES/FPS. Interacts with SMARCAD1. Interacts with, and sumoylates IRF7. Interacts with MAGEC2. Part of a complex composed of TRIM28, HDAC1, HDAC2 and EHMT2. Interacts with AICDA. Interacts (via the RBCC domain) with KOX1 (via the KRAB domain), ZNF268 (via the KRAB domain) and ZNF300 (via the KRAB domain); the interactions increase KOX1, ZNF268 and ZNF300 nuclear localization activities. The large PER complex involved in the histone methylation is composed of at least PER2, CBX3, TRIM28, SUV39H1 and/or SUV39H2; CBX3 mediates the formation of the complex. Interacts with isoform 2 of ZFP90. Forms a complex with FOXP3 in the presence of isoform 2 of ZFP90. Interacts with NR4A3; the interactions potentiates NR4A3 activity on NurRE promoter. Interacts (unphosphorylated or phosphorylated form) with ZBTB1 (via BTB domain). Probably part of a corepressor complex containing ZNF304, TRIM28, SETDB1 and DNMT1. Interacts with ATRX. Forms a complex with ATRX, SETDB1 and ZNF274. Interacts with ZFP568; the interaction mediates ZFP568 transcriptional repression activity. Interacts with RRP1B. Interacts with CRY1. Interacts with ZNF263; recruited to the SIX3 promoter along with other proteins involved in chromatin modification and transcriptional corepression where it contributes to transcriptional repression. Interacts with CYREN (via XLF motif). Interacts with TRIM17; this interaction prevents TRIM28 activity. Interacts with ZNF746. Interacts with PHF13. Interacts with ZNF354C. Interacts with ZNF432; the interaction is independent of PARP1. As to quaternary structure, (Microbial infection) Interacts with herpes virus 8 protein LANA1; this interaction facilitates establishment of viral latency. ATM-induced phosphorylation on Ser-824 represses sumoylation leading to the de-repression of expression of a subset of genes involved in cell cycle control and apoptosis in response to genotoxic stress. Dephosphorylation by the phosphatases, PPP1CA and PP1CB forms, allows sumoylation and expression of TRIM28 target genes. Post-translationally, sumoylation/desumoylation events regulate TRIM28-mediated transcriptional repression. Sumoylation is required for interaction with CHD3 and SETDB1 and the corepressor activity. Represses and is repressed by Ser-824 phosphorylation. Enhances the TRIM28 corepressor activity, inhibiting transcriptional activity of a number of genes including GADD45A and CDKN1A/p21. Lys-554, Lys-779 and Lys-804 are the major sites of sumoylation. In response to Dox-induced DNA damage, enhanced phosphorylation on Ser-824 prevents sumoylation and allows de-repression of CDKN1A/p21. In terms of processing, auto-ubiquitinated; enhanced by MAGEA2 and MAGEC2. Citrullinated by PADI4. Post-translationally, ADP-ribosylated by SIRT6, promoting TRIM28/KAP1 interaction with CBX5, thereby contributing to the packaging of LINE-1 retrotransposon elements into transcriptionally repressive heterochromatin. As to expression, expressed in all tissues tested including spleen, thymus, prostate, testis, ovary, small intestine, colon and peripheral blood leukocytes.

Its subcellular location is the nucleus. The catalysed reaction is S-ubiquitinyl-[E2 ubiquitin-conjugating enzyme]-L-cysteine + [acceptor protein]-L-lysine = [E2 ubiquitin-conjugating enzyme]-L-cysteine + N(6)-ubiquitinyl-[acceptor protein]-L-lysine.. Its pathway is protein modification; protein sumoylation. Its function is as follows. Nuclear corepressor for KRAB domain-containing zinc finger proteins (KRAB-ZFPs). Mediates gene silencing by recruiting CHD3, a subunit of the nucleosome remodeling and deacetylation (NuRD) complex, and SETDB1 (which specifically methylates histone H3 at 'Lys-9' (H3K9me)) to the promoter regions of KRAB target genes. Enhances transcriptional repression by coordinating the increase in H3K9me, the decrease in histone H3 'Lys-9 and 'Lys-14' acetylation (H3K9ac and H3K14ac, respectively) and the disposition of HP1 proteins to silence gene expression. Recruitment of SETDB1 induces heterochromatinization. May play a role as a coactivator for CEBPB and NR3C1 in the transcriptional activation of ORM1. Also a corepressor for ERBB4. Inhibits E2F1 activity by stimulating E2F1-HDAC1 complex formation and inhibiting E2F1 acetylation. May serve as a partial backup to prevent E2F1-mediated apoptosis in the absence of RB1. Important regulator of CDKN1A/p21(CIP1). Has E3 SUMO-protein ligase activity toward itself via its PHD-type zinc finger. Also specifically sumoylates IRF7, thereby inhibiting its transactivation activity. Ubiquitinates p53/TP53 leading to its proteasomal degradation; the function is enhanced by MAGEC2 and MAGEA2, and possibly MAGEA3 and MAGEA6. Mediates the nuclear localization of KOX1, ZNF268 and ZNF300 transcription factors. In association with isoform 2 of ZFP90, is required for the transcriptional repressor activity of FOXP3 and the suppressive function of regulatory T-cells (Treg). Probably forms a corepressor complex required for activated KRAS-mediated promoter hypermethylation and transcriptional silencing of tumor suppressor genes (TSGs) or other tumor-related genes in colorectal cancer (CRC) cells. Required to maintain a transcriptionally repressive state of genes in undifferentiated embryonic stem cells (ESCs). In ESCs, in collaboration with SETDB1, is also required for H3K9me3 and silencing of endogenous and introduced retroviruses in a DNA-methylation independent-pathway. Associates at promoter regions of tumor suppressor genes (TSGs) leading to their gene silencing. The SETDB1-TRIM28-ZNF274 complex may play a role in recruiting ATRX to the 3'-exons of zinc-finger coding genes with atypical chromatin signatures to establish or maintain/protect H3K9me3 at these transcriptionally active regions. Functionally, (Microbial infection) Plays a critical role in the shutdown of lytic gene expression during the early stage of herpes virus 8 primary infection. This inhibition is mediated through interaction with herpes virus 8 protein LANA1. The protein is Transcription intermediary factor 1-beta of Homo sapiens (Human).